The following is a 238-amino-acid chain: Probable transcriptional regulatory protein SPD_1725 (238 aa).

Belongs to the TACO1 family. YeeN subfamily.

The protein localises to the cytoplasm. The chain is Probable transcriptional regulatory protein SPD_1725 from Streptococcus pneumoniae serotype 2 (strain D39 / NCTC 7466).